Consider the following 1308-residue polypeptide: Receptor tyrosine-protein kinase erbB-4 (1308 aa).

The signal sequence occupies residues 1–25; the sequence is MKPATGLWVWVSLLVAAGTVQPSDS. The Extracellular segment spans residues 26–651; it reads QSVCAGTENK…STLPQHARTP (626 aa). Cys29 and Cys56 are oxidised to a cystine. 3 N-linked (GlcNAc...) asparagine glycosylation sites follow: Asn138, Asn174, and Asn181. 12 cysteine pairs are disulfide-bonded: Cys156-Cys186, Cys189-Cys197, Cys193-Cys205, Cys213-Cys221, Cys217-Cys229, Cys230-Cys238, Cys234-Cys246, Cys249-Cys258, Cys262-Cys289, Cys293-Cys304, Cys308-Cys323, and Cys326-Cys330. Asn253 is a glycosylation site (N-linked (GlcNAc...) asparagine). Residues Asn358, Asn410, Asn473, and Asn495 are each glycosylated (N-linked (GlcNAc...) asparagine). Disulfide bonds link Cys503/Cys512, Cys507/Cys520, Cys523/Cys532, Cys536/Cys552, Cys555/Cys569, Cys559/Cys577, Cys580/Cys589, Cys593/Cys614, Cys617/Cys625, and Cys621/Cys633. Asn548 carries N-linked (GlcNAc...) asparagine glycosylation. Residue Asn576 is glycosylated (N-linked (GlcNAc...) asparagine). N-linked (GlcNAc...) asparagine glycosylation is present at Asn620. A helical membrane pass occupies residues 652–675; that stretch reads LIAAGVIGGLFILVIVGLTFAVYV. The Nuclear localization signal motif lies at 676–684; the sequence is RRKSIKKKR. The Cytoplasmic portion of the chain corresponds to 676–1308; the sequence is RRKSIKKKRA…PPYRHRNTVV (633 aa). Residues 718–985 enclose the Protein kinase domain; sequence LKRVKVLGSG…RMARDPQRYL (268 aa). Residues 724 to 732, Lys751, 797 to 799, and 843 to 848 contribute to the ATP site; these read LGSGAFGTV, QLM, and DLAARN. Asp843 serves as the catalytic Proton acceptor. Tyr875, Tyr1035, Tyr1056, Tyr1150, Tyr1162, Tyr1188, Tyr1202, Tyr1242, Tyr1258, and Tyr1284 each carry phosphotyrosine; by autocatalysis. Short sequence motifs (PPxY motif) lie at residues 1032–1035 and 1053–1056; these read PPIY and PPAY. A disordered region spans residues 1117 to 1150; the sequence is PHVQEDSSTQRYSADPTVFAPERSPRGELDEEGY. The PPxY motif 3 motif lies at 1298-1301; sequence PPPY. Positions 1306-1308 match the PDZ-binding motif; that stretch reads TVV.

It belongs to the protein kinase superfamily. Tyr protein kinase family. EGF receptor subfamily. In terms of assembly, monomer in the absence of bound ligand. Homodimer or heterodimer with another ERBB family member upon ligand binding, thus forming heterotetramers. Interacts with EGFR and ERBB2. Interacts with CBFA2T3. Interacts with DLG2 (via its PDZ domain), DLG3 (via its PDZ domain), DLG4 (via its PDZ domain) and SNTB2 (via its PDZ domain). Interacts with MUC1. Interacts (via its PPxy motifs) with WWOX. Interacts (via the PPxY motif 3 of isoform JM-A CYT-2) with YAP1 (via the WW domain 1 of isoform 1). Interacts (isoform JM-A CYT-1 and isoform JM-B CYT-1) with WWP1. Interacts (via its intracellular domain) with TRIM28. Interacts (via the intracellular domains of both CYT-1 and CYT-2 isoforms) with KAP1; the interaction does not phosphorylate KAP1 but represses ERBB4-mediated transcriptional activity. Interacts with PRPU, DDX23, MATR3, RBM15, ILF3, KAP1, U5S1, U2SURP, ITCH, HNRNPU, AP2A1, NULC, LEO1, WWP2, IGHG1, HXK1, GRB7 and SRRT. Interacts (phosphorylated isoform JM-A CYT-1 and isoform JM-B CYT-1) with PIK3R1. Interacts with SHC1. Interacts with GRB2. Interacts (soluble intracellular domain) with STAT5A. Interacts (soluble intracellular domain) with BCL2. Interacts (phosphorylated) with STAT1. Isoform JM-A CYT-1 and isoform JM-A CYT-2 are processed by ADAM17. Proteolytic processing in response to ligand or 12-O-tetradecanoylphorbol-13-acetate stimulation results in the production of 120 kDa soluble receptor forms and intermediate membrane-anchored 80 kDa fragments (m80HER4), which are further processed by a presenilin-dependent gamma-secretase to release a cytoplasmic intracellular domain (E4ICD; E4ICD1/s80Cyt1 or E4ICD2/s80Cyt2, depending on the isoform). Membrane-anchored 80 kDa fragments of the processed isoform JM-A CYT-1 are more readily degraded by the proteasome than fragments of isoform JM-A CYT-2, suggesting a prevalence of E4ICD2 over E4ICD1. Isoform JM-B CYT-1 and isoform JM-B CYT-2 lack the ADAM17 cleavage site and are not processed by ADAM17, precluding further processing by gamma-secretase. Post-translationally, autophosphorylated on tyrosine residues in response to ligand binding. Autophosphorylation occurs in trans, i.e. one subunit of the dimeric receptor phosphorylates tyrosine residues on the other subunit. Ligands trigger phosphorylation at specific tyrosine residues, thereby creating binding sites for scaffold proteins and effectors. Constitutively phosphorylated at a basal level when overexpressed in heterologous systems; ligand binding leads to increased phosphorylation. Phosphorylation at Tyr-1035 is important for interaction with STAT1. Phosphorylation at Tyr-1056 is important for interaction with PIK3R1. Phosphorylation at Tyr-1242 is important for interaction with SHC1. Phosphorylation at Tyr-1188 may also contribute to the interaction with SHC1. Isoform JM-A CYT-2 is constitutively phosphorylated on tyrosine residues in a ligand-independent manner. E4ICD2 but not E4ICD1 is phosphorylated on tyrosine residues. In terms of processing, ubiquitinated. During mitosis, the ERBB4 intracellular domain is ubiquitinated by the APC/C complex and targeted to proteasomal degradation. Isoform JM-A CYT-1 and isoform JM-B CYT-1 are ubiquitinated by WWP1. The ERBB4 intracellular domain (E4ICD1) is ubiquitinated, and this involves NEDD4. Expressed at highest levels in brain, heart, kidney, in addition to skeletal muscle, parathyroid, cerebellum, pituitary, spleen, testis and breast. Lower levels in thymus, lung, salivary gland, and pancreas. Isoform JM-A CYT-1 and isoform JM-B CYT-1 are expressed in cerebellum, but only the isoform JM-B is expressed in the heart.

The protein resides in the cell membrane. It is found in the nucleus. The protein localises to the mitochondrion. It catalyses the reaction L-tyrosyl-[protein] + ATP = O-phospho-L-tyrosyl-[protein] + ADP + H(+). Binding of a cognate ligand leads to dimerization and activation by autophosphorylation on tyrosine residues. In vitro kinase activity is increased by Mg(2+). Inhibited by PD153035, lapatinib, gefitinib (iressa, ZD1839), AG1478 and BIBX1382BS. Functionally, tyrosine-protein kinase that plays an essential role as cell surface receptor for neuregulins and EGF family members and regulates development of the heart, the central nervous system and the mammary gland, gene transcription, cell proliferation, differentiation, migration and apoptosis. Required for normal cardiac muscle differentiation during embryonic development, and for postnatal cardiomyocyte proliferation. Required for normal development of the embryonic central nervous system, especially for normal neural crest cell migration and normal axon guidance. Required for mammary gland differentiation, induction of milk proteins and lactation. Acts as cell-surface receptor for the neuregulins NRG1, NRG2, NRG3 and NRG4 and the EGF family members BTC, EREG and HBEGF. Ligand binding triggers receptor dimerization and autophosphorylation at specific tyrosine residues that then serve as binding sites for scaffold proteins and effectors. Ligand specificity and signaling is modulated by alternative splicing, proteolytic processing, and by the formation of heterodimers with other ERBB family members, thereby creating multiple combinations of intracellular phosphotyrosines that trigger ligand- and context-specific cellular responses. Mediates phosphorylation of SHC1 and activation of the MAP kinases MAPK1/ERK2 and MAPK3/ERK1. Isoform JM-A CYT-1 and isoform JM-B CYT-1 phosphorylate PIK3R1, leading to the activation of phosphatidylinositol 3-kinase and AKT1 and protect cells against apoptosis. Isoform JM-A CYT-1 and isoform JM-B CYT-1 mediate reorganization of the actin cytoskeleton and promote cell migration in response to NRG1. Isoform JM-A CYT-2 and isoform JM-B CYT-2 lack the phosphotyrosine that mediates interaction with PIK3R1, and hence do not phosphorylate PIK3R1, do not protect cells against apoptosis, and do not promote reorganization of the actin cytoskeleton and cell migration. Proteolytic processing of isoform JM-A CYT-1 and isoform JM-A CYT-2 gives rise to the corresponding soluble intracellular domains (4ICD) that translocate to the nucleus, promote nuclear import of STAT5A, activation of STAT5A, mammary epithelium differentiation, cell proliferation and activation of gene expression. The ERBB4 soluble intracellular domains (4ICD) colocalize with STAT5A at the CSN2 promoter to regulate transcription of milk proteins during lactation. The ERBB4 soluble intracellular domains can also translocate to mitochondria and promote apoptosis. The protein is Receptor tyrosine-protein kinase erbB-4 (ERBB4) of Homo sapiens (Human).